The following is a 776-amino-acid chain: Protein translocase subunit SecA 2 (776 aa).

Residues Q80, G98–T102, and D486 each bind ATP.

This sequence belongs to the SecA family. In terms of assembly, monomer and homodimer. Part of the essential Sec protein translocation apparatus which comprises SecA, SecYEG and auxiliary proteins SecDF. Other proteins may also be involved.

The protein localises to the cell membrane. Its subcellular location is the cytoplasm. It catalyses the reaction ATP + H2O + cellular proteinSide 1 = ADP + phosphate + cellular proteinSide 2.. Functionally, part of the Sec protein translocase complex. Interacts with the SecYEG preprotein conducting channel. Has a central role in coupling the hydrolysis of ATP to the transfer of proteins into and across the cell membrane, serving as an ATP-driven molecular motor driving the stepwise translocation of polypeptide chains across the membrane. In Listeria monocytogenes serotype 1/2a (strain 10403S), this protein is Protein translocase subunit SecA 2.